We begin with the raw amino-acid sequence, 475 residues long: Exodeoxyribonuclease 7 large subunit (475 aa).

Belongs to the XseA family. Heterooligomer composed of large and small subunits.

It localises to the cytoplasm. The enzyme catalyses Exonucleolytic cleavage in either 5'- to 3'- or 3'- to 5'-direction to yield nucleoside 5'-phosphates.. In terms of biological role, bidirectionally degrades single-stranded DNA into large acid-insoluble oligonucleotides, which are then degraded further into small acid-soluble oligonucleotides. This chain is Exodeoxyribonuclease 7 large subunit, found in Bartonella henselae (strain ATCC 49882 / DSM 28221 / CCUG 30454 / Houston 1) (Rochalimaea henselae).